We begin with the raw amino-acid sequence, 414 residues long: Esterase FrsA (414 aa).

It belongs to the FrsA family.

The catalysed reaction is a carboxylic ester + H2O = an alcohol + a carboxylate + H(+). Catalyzes the hydrolysis of esters. The chain is Esterase FrsA from Escherichia coli O7:K1 (strain IAI39 / ExPEC).